The primary structure comprises 392 residues: THO complex subunit MFT1 (392 aa).

Composition is skewed to acidic residues over residues 258-271 and 290-330; these read DNID…EDEE and NVDE…EVDG. Residues 258-392 form a disordered region; the sequence is DNIDEDYESD…SASSSVEEVK (135 aa). Serine 266 is subject to Phosphoserine. Polar residues predominate over residues 331–344; it reads ESSQQEDNSRQGNN. Positions 345–367 are enriched in acidic residues; sequence EETDKETGVIEEPDAVNDAEEAD. The span at 377–392 shows a compositional bias: polar residues; sequence GTTSDFSASSSVEEVK.

Component of the THO complex, which is composed of HPR1, MFT1, THO2 and THP2. Together with SUB2, TEX1 and YRA1, THO forms the transcription/export (TREX) complex. THO associates with DNA and RNA in vitro.

It is found in the nucleus. Functionally, component the THO subcomplex of the TREX complex, which operates in coupling transcription elongation to mRNA export. The THO complex is recruited to transcribed genes and moves along the gene with the elongating polymerase during transcription. THO is important for stabilizing nascent RNA in the RNA polymerase II elongation complex by preventing formation of DNA:RNA hybrids behind the elongating polymerase. It functions in cotranscriptional formation of an export-competent messenger ribonucleoprotein particle (mRNP) by facilitating the loading of ATP-dependent RNA helicase SUB2 and the mRNA export factor YRA1 along the nascent mRNA. The chain is THO complex subunit MFT1 (MFT1) from Saccharomyces cerevisiae (strain ATCC 204508 / S288c) (Baker's yeast).